We begin with the raw amino-acid sequence, 134 residues long: Ribonuclease P protein component 2 (134 aa).

It belongs to the eukaryotic/archaeal RNase P protein component 2 family. As to quaternary structure, consists of a catalytic RNA component and at least 4-5 protein subunits. Forms a subcomplex with Rnp3 which stimulates the catalytic RNA.

It is found in the cytoplasm. It carries out the reaction Endonucleolytic cleavage of RNA, removing 5'-extranucleotides from tRNA precursor.. Functionally, part of ribonuclease P, a protein complex that generates mature tRNA molecules by cleaving their 5'-ends. The protein is Ribonuclease P protein component 2 of Methanocaldococcus jannaschii (strain ATCC 43067 / DSM 2661 / JAL-1 / JCM 10045 / NBRC 100440) (Methanococcus jannaschii).